Reading from the N-terminus, the 154-residue chain is Crossover junction endodeoxyribonuclease RuvC (154 aa).

Active-site residues include Asp-7, Glu-67, and Asp-139. 3 residues coordinate Mg(2+): Asp-7, Glu-67, and Asp-139.

The protein belongs to the RuvC family. As to quaternary structure, homodimer which binds Holliday junction (HJ) DNA. The HJ becomes 2-fold symmetrical on binding to RuvC with unstacked arms; it has a different conformation from HJ DNA in complex with RuvA. In the full resolvosome a probable DNA-RuvA(4)-RuvB(12)-RuvC(2) complex forms which resolves the HJ. Mg(2+) is required as a cofactor.

The protein resides in the cytoplasm. It carries out the reaction Endonucleolytic cleavage at a junction such as a reciprocal single-stranded crossover between two homologous DNA duplexes (Holliday junction).. The RuvA-RuvB-RuvC complex processes Holliday junction (HJ) DNA during genetic recombination and DNA repair. Endonuclease that resolves HJ intermediates. Cleaves cruciform DNA by making single-stranded nicks across the HJ at symmetrical positions within the homologous arms, yielding a 5'-phosphate and a 3'-hydroxyl group; requires a central core of homology in the junction. The consensus cleavage sequence is 5'-(A/T)TT(C/G)-3'. Cleavage occurs on the 3'-side of the TT dinucleotide at the point of strand exchange. HJ branch migration catalyzed by RuvA-RuvB allows RuvC to scan DNA until it finds its consensus sequence, where it cleaves and resolves the cruciform DNA. In Synechococcus sp. (strain WH7803), this protein is Crossover junction endodeoxyribonuclease RuvC.